A 252-amino-acid chain; its full sequence is C-X-C motif chemokine 16 (252 aa).

Positions 1 to 25 (MMLGRTSRLLLVLLFIAYATTSGNG) are cleaved as a signal peptide. Residues 26–198 (NEGSKVGSCP…RGPQAGTSAT (173 aa)) are Extracellular-facing. 2 disulfides stabilise this stretch: Cys-34/Cys-64 and Cys-36/Cys-78. Disordered regions lie at residues 115 to 145 (LPEP…QQPT) and 163 to 195 (TTTY…QAGT). Residues 125–145 (DTATTSQTYLPSTLQRTQQPT) are compositionally biased toward polar residues. Positions 176–189 (PEAKENQKQLKENR) are enriched in basic and acidic residues. A helical transmembrane segment spans residues 199–219 (VPVLSLLAIVFILAGVLLYVV). Residues 220–252 (CKRRKNQLLQHPPDLAASLYTCSRRTRAENGTL) lie on the Cytoplasmic side of the membrane.

It belongs to the intercrine alpha (chemokine CxC) family. In terms of processing, glycosylated.

It localises to the membrane. In terms of biological role, induces a strong chemotactic response. Induces calcium mobilization. Binds to CXCR6/Bonzo. Also acts as a scavenger receptor on macrophages, which specifically binds to OxLDL (oxidized low density lipoprotein), suggesting that it may be involved in pathophysiology such as atherogenesis. The chain is C-X-C motif chemokine 16 (CXCL16) from Bos taurus (Bovine).